The primary structure comprises 1069 residues: Carbamoyl phosphate synthase large chain (1069 aa).

The carboxyphosphate synthetic domain stretch occupies residues Met-1 to Glu-401. The ATP site is built by Arg-129, Arg-169, Gly-175, Gly-176, Lys-208, Val-210, Glu-215, Gly-241, Ile-242, His-243, Gln-284, and Glu-298. The ATP-grasp 1 domain maps to Arg-133–Leu-327. Residues Gln-284, Glu-298, and Asn-300 each coordinate Mg(2+). Residues Gln-284, Glu-298, and Asn-300 each coordinate Mn(2+). The interval Ile-402–Val-549 is oligomerization domain. The interval Glu-550–Asn-932 is carbamoyl phosphate synthetic domain. Residues Asp-674–Met-864 enclose the ATP-grasp 2 domain. Arg-710, Lys-749, Leu-751, Glu-755, Gly-780, Val-781, His-782, Ser-783, Gln-823, and Glu-835 together coordinate ATP. Mg(2+) is bound by residues Gln-823, Glu-835, and Asn-837. The Mn(2+) site is built by Gln-823, Glu-835, and Asn-837. The 138-residue stretch at Asn-932–Lys-1069 folds into the MGS-like domain. An allosteric domain region spans residues Met-933 to Lys-1069.

The protein belongs to the CarB family. As to quaternary structure, composed of two chains; the small (or glutamine) chain promotes the hydrolysis of glutamine to ammonia, which is used by the large (or ammonia) chain to synthesize carbamoyl phosphate. Tetramer of heterodimers (alpha,beta)4. Mg(2+) serves as cofactor. Requires Mn(2+) as cofactor.

The enzyme catalyses hydrogencarbonate + L-glutamine + 2 ATP + H2O = carbamoyl phosphate + L-glutamate + 2 ADP + phosphate + 2 H(+). It carries out the reaction hydrogencarbonate + NH4(+) + 2 ATP = carbamoyl phosphate + 2 ADP + phosphate + 2 H(+). The protein operates within amino-acid biosynthesis; L-arginine biosynthesis; carbamoyl phosphate from bicarbonate: step 1/1. Its pathway is pyrimidine metabolism; UMP biosynthesis via de novo pathway; (S)-dihydroorotate from bicarbonate: step 1/3. Its function is as follows. Large subunit of the glutamine-dependent carbamoyl phosphate synthetase (CPSase). CPSase catalyzes the formation of carbamoyl phosphate from the ammonia moiety of glutamine, carbonate, and phosphate donated by ATP, constituting the first step of 2 biosynthetic pathways, one leading to arginine and/or urea and the other to pyrimidine nucleotides. The large subunit (synthetase) binds the substrates ammonia (free or transferred from glutamine from the small subunit), hydrogencarbonate and ATP and carries out an ATP-coupled ligase reaction, activating hydrogencarbonate by forming carboxy phosphate which reacts with ammonia to form carbamoyl phosphate. The polypeptide is Carbamoyl phosphate synthase large chain (Clostridium botulinum (strain Eklund 17B / Type B)).